Reading from the N-terminus, the 62-residue chain is Kininogen-1 (62 aa).

The N-terminal stretch at 1–22 (MDILKKSLFLVLFLGLVSFSIC) is a signal peptide. The tract at residues 24–62 (EEKRDTEEEENDDEIEEESEEKKREAPERPPGFTPFRIY) is disordered. The span at 30-42 (EEEENDDEIEEES) shows a compositional bias: acidic residues. Position 54 is a 4-hydroxyproline; partial (P54). Y62 bears the Sulfotyrosine mark.

This sequence belongs to the frog skin active peptide (FSAP) family. Bradykinin-related peptide subfamily. As to expression, expressed by the skin glands.

The protein localises to the secreted. In terms of biological role, inhibits ACE with a Ki of 1.6 uM, and targets B2 bradykinin receptor (BDKRB2). Provokes contraction of smooth muscle preparation (ileum). In vivo, induces an early hyperalgesic effects in living rats after intraplantar injection. This is Kininogen-1 from Phyllomedusa sauvagei (Sauvage's leaf frog).